Reading from the N-terminus, the 413-residue chain is MTDNRVENSSGRAARKLRLALMGPAFIAAIGYIDPGNFATNIQAGASFGYQLLWVVVWANLMAMLIQILSAKLGIATGKNLAEQIRDHYPRPVVWFYWVQAEIIAMATDLAEFIGAAIGFKLILGVSLLQGAVLTGIATFLILMLQRRGQKPLEKVIGGLLLFVAAAYIVELFFSQPDMAQLGKGMVIPALPNPEAVFLAAGVLGATIMPHVIYLHSSLTQHLHGGTRQQRYSATKWDVAIAMTIAGFVNLAMMATAAAAFHFSGHTGIADLDQAYLTLEPLLSHAAATVFGLSLVAAGLSSTVVGTLAGQVVMQGFVRFHIPLWVRRTITMLPSFIVILMGLDPTRILVMSQVLLSFGIALALVPLLIFTSNATLMGELVNTRRVKQVGWIIVVLVVALNIWLLVGTVMGLS.

At 1–19 the chain is on the cytoplasmic side; it reads MTDNRVENSSGRAARKLRL. A helical transmembrane segment spans residues 20 to 39; it reads ALMGPAFIAAIGYIDPGNFA. Residues 40 to 51 are Periplasmic-facing; the sequence is TNIQAGASFGYQ. A helical membrane pass occupies residues 52–71; sequence LLWVVVWANLMAMLIQILSA. Topologically, residues 72–95 are cytoplasmic; sequence KLGIATGKNLAEQIRDHYPRPVVW. Residues 96-118 form a helical membrane-spanning segment; sequence FYWVQAEIIAMATDLAEFIGAAI. Residues 119 to 125 lie on the Periplasmic side of the membrane; that stretch reads GFKLILG. The helical transmembrane segment at 126–145 threads the bilayer; that stretch reads VSLLQGAVLTGIATFLILML. At 146-155 the chain is on the cytoplasmic side; sequence QRRGQKPLEK. The chain crosses the membrane as a helical span at residues 156–175; the sequence is VIGGLLLFVAAAYIVELFFS. Residues 176 to 196 are Periplasmic-facing; that stretch reads QPDMAQLGKGMVIPALPNPEA. Residues 197 to 220 form a helical membrane-spanning segment; it reads VFLAAGVLGATIMPHVIYLHSSLT. At 221-238 the chain is on the cytoplasmic side; sequence QHLHGGTRQQRYSATKWD. The chain crosses the membrane as a helical span at residues 239–258; it reads VAIAMTIAGFVNLAMMATAA. Topologically, residues 259-276 are periplasmic; the sequence is AAFHFSGHTGIADLDQAY. The helical transmembrane segment at 277 to 297 threads the bilayer; that stretch reads LTLEPLLSHAAATVFGLSLVA. The Cytoplasmic portion of the chain corresponds to 298-327; sequence AGLSSTVVGTLAGQVVMQGFVRFHIPLWVR. Residues 328-344 form a helical membrane-spanning segment; that stretch reads RTITMLPSFIVILMGLD. At 345–350 the chain is on the periplasmic side; that stretch reads PTRILV. Residues 351–370 traverse the membrane as a helical segment; sequence MSQVLLSFGIALALVPLLIF. The Cytoplasmic portion of the chain corresponds to 371 to 387; it reads TSNATLMGELVNTRRVK. Residues 388-406 form a helical membrane-spanning segment; sequence QVGWIIVVLVVALNIWLLV. At 407 to 413 the chain is on the periplasmic side; sequence GTVMGLS.

It belongs to the NRAMP family.

The protein resides in the cell inner membrane. Its function is as follows. H(+)-stimulated, divalent metal cation uptake system. The polypeptide is Divalent metal cation transporter MntH (Salmonella paratyphi C (strain RKS4594)).